The sequence spans 401 residues: Argininosuccinate synthase (401 aa).

Residue 8–16 (AYSGGLDTS) coordinates ATP. Y85 provides a ligand contact to L-citrulline. An ATP-binding site is contributed by G115. T117, N121, and D122 together coordinate L-aspartate. Residue N121 participates in L-citrulline binding. 4 residues coordinate L-citrulline: R125, S173, E258, and Y270.

This sequence belongs to the argininosuccinate synthase family. Type 1 subfamily. As to quaternary structure, homotetramer.

The protein localises to the cytoplasm. It catalyses the reaction L-citrulline + L-aspartate + ATP = 2-(N(omega)-L-arginino)succinate + AMP + diphosphate + H(+). It participates in amino-acid biosynthesis; L-arginine biosynthesis; L-arginine from L-ornithine and carbamoyl phosphate: step 2/3. This chain is Argininosuccinate synthase, found in Staphylococcus aureus (strain bovine RF122 / ET3-1).